The following is a 229-amino-acid chain: Artemin (229 aa).

Ala-1 bears the N-acetylalanine mark. A Ferritin-like diiron domain is found at 25–173 (HNFDPECEKA…DCLSNLHCIG (149 aa)).

This sequence belongs to the ferritin family.

This chain is Artemin, found in Artemia salina (Brine shrimp).